Here is an 877-residue protein sequence, read N- to C-terminus: Translation initiation factor IF-2 (877 aa).

Basic and acidic residues predominate over residues 66–115 (PKKESTAKKTTKKDEVKKEEKKTTTKKESKNPAKAVSEKKDEVKKEEKQP). Disordered regions lie at residues 66–127 (PKKE…LEEK), 187–208 (SDES…SKKE), and 241–290 (ENKP…KESE). A compositionally biased stretch (basic residues) spans 192–201 (KRKKKEKKNH). Residues 245-265 (AQPTNKKQPNILKQSLNNSIN) are compositionally biased toward polar residues. The 168-residue stretch at 376–543 (QRAPVITIMG…IVLLQADILE (168 aa)) folds into the tr-type G domain. The G1 stretch occupies residues 385-392 (GHVDHGKT). GTP is bound at residue 385 to 392 (GHVDHGKT). The segment at 410–414 (GITQH) is G2. The interval 431 to 434 (DTPG) is G3. GTP is bound by residues 431-435 (DTPGH) and 485-488 (NKMD). Residues 485–488 (NKMD) form a G4 region. Positions 521–523 (SAK) are G5.

This sequence belongs to the TRAFAC class translation factor GTPase superfamily. Classic translation factor GTPase family. IF-2 subfamily.

The protein resides in the cytoplasm. One of the essential components for the initiation of protein synthesis. Protects formylmethionyl-tRNA from spontaneous hydrolysis and promotes its binding to the 30S ribosomal subunits. Also involved in the hydrolysis of GTP during the formation of the 70S ribosomal complex. The sequence is that of Translation initiation factor IF-2 from Campylobacter lari (strain RM2100 / D67 / ATCC BAA-1060).